We begin with the raw amino-acid sequence, 690 residues long: Elongation factor G (690 aa).

The 276-residue stretch at 8–283 (EYIRNIGICA…AVVGFLPSPI (276 aa)) folds into the tr-type G domain. Residues 17–24 (AHIDAGKT), 81–85 (DTPGH), and 135–138 (NKMD) contribute to the GTP site.

Belongs to the TRAFAC class translation factor GTPase superfamily. Classic translation factor GTPase family. EF-G/EF-2 subfamily.

The protein localises to the cytoplasm. Catalyzes the GTP-dependent ribosomal translocation step during translation elongation. During this step, the ribosome changes from the pre-translocational (PRE) to the post-translocational (POST) state as the newly formed A-site-bound peptidyl-tRNA and P-site-bound deacylated tRNA move to the P and E sites, respectively. Catalyzes the coordinated movement of the two tRNA molecules, the mRNA and conformational changes in the ribosome. This chain is Elongation factor G, found in Rickettsia canadensis (strain McKiel).